The following is a 156-amino-acid chain: ATP synthase subunit b (156 aa).

A helical membrane pass occupies residues 7 to 27 (LFAQIIVFFGLVWFTMKFVWP).

Belongs to the ATPase B chain family. In terms of assembly, F-type ATPases have 2 components, F(1) - the catalytic core - and F(0) - the membrane proton channel. F(1) has five subunits: alpha(3), beta(3), gamma(1), delta(1), epsilon(1). F(0) has three main subunits: a(1), b(2) and c(10-14). The alpha and beta chains form an alternating ring which encloses part of the gamma chain. F(1) is attached to F(0) by a central stalk formed by the gamma and epsilon chains, while a peripheral stalk is formed by the delta and b chains.

It is found in the cell inner membrane. F(1)F(0) ATP synthase produces ATP from ADP in the presence of a proton or sodium gradient. F-type ATPases consist of two structural domains, F(1) containing the extramembraneous catalytic core and F(0) containing the membrane proton channel, linked together by a central stalk and a peripheral stalk. During catalysis, ATP synthesis in the catalytic domain of F(1) is coupled via a rotary mechanism of the central stalk subunits to proton translocation. In terms of biological role, component of the F(0) channel, it forms part of the peripheral stalk, linking F(1) to F(0). This Neisseria meningitidis serogroup C (strain 053442) protein is ATP synthase subunit b.